Consider the following 108-residue polypeptide: uncharacterized protein (108 aa).

A signal peptide spans 1–24 (MNLWEFRFGKSFLFIPNFIMKVLA).

To M.jannaschii MJ0803.

This is an uncharacterized protein from Methanocaldococcus jannaschii (strain ATCC 43067 / DSM 2661 / JAL-1 / JCM 10045 / NBRC 100440) (Methanococcus jannaschii).